We begin with the raw amino-acid sequence, 414 residues long: Esterase FrsA (414 aa).

It belongs to the FrsA family.

The enzyme catalyses a carboxylic ester + H2O = an alcohol + a carboxylate + H(+). Its function is as follows. Catalyzes the hydrolysis of esters. This is Esterase FrsA from Salmonella choleraesuis (strain SC-B67).